We begin with the raw amino-acid sequence, 616 residues long: Protein decapentaplegic (616 aa).

An N-terminal signal peptide occupies residues Met-1–Thr-23. Residues Glu-24–Arg-474 constitute a propeptide that is removed on maturation. Residues Ser-80–Ile-188 are disordered. A compositionally biased stretch (low complexity) spans Asn-86 to Pro-105. Positions Arg-106–His-115 are enriched in basic residues. A compositionally biased stretch (basic and acidic residues) spans Ser-116 to Lys-139. N-linked (GlcNAc...) asparagine glycosylation is present at Asn-147. Positions Ala-173–Ile-188 are enriched in polar residues. 2 N-linked (GlcNAc...) asparagine glycosylation sites follow: Asn-360 and Asn-395. Residues Ala-470 to Glu-512 form a disordered region. Over residues Ser-477–Gly-496 the composition is skewed to gly residues. A compositionally biased stretch (basic residues) spans Arg-497–Lys-509. Disulfide bonds link Cys-515/Cys-581, Cys-544/Cys-613, and Cys-548/Cys-615. N-linked (GlcNAc...) asparagine glycosylation is present at Asn-557.

The protein belongs to the TGF-beta family. As to quaternary structure, heterodimers of scw/dpp are the active subunit, dpp/dpp homodimers elicit a basal response and scw/scw homodimers alone are ineffective in specifying a dorsal pattern. In terms of tissue distribution, expressed in the imaginal discs associated with establishment of the proximal-distal axis of the appendages, and midgut mesoderm.

The protein resides in the secreted. Functionally, acts as an extracellular morphogen to establish at least two cellular response thresholds within the dorsal half of the drosophila embryo. Required for the proper development of the embryonic dorsal hypoderm, for viability of larvae and for cell viability of the epithelial cells in the imaginal disks. Acts together with scw. This Drosophila pseudoobscura pseudoobscura (Fruit fly) protein is Protein decapentaplegic (dpp).